The primary structure comprises 462 residues: MSPFAPFDAQTQVLLIDDDPHLRQALRQTLDLAGLKVATLDDARQLDTAQCKDWPGVVVSDIRMPGIDGMELLRQLHEQDADLPVILITGHGDVPLAVQAMRGGAYDFLEKPFPSDALLDSVRRALEVRRLVLENRTLRLALAERHELHGRLIGRSAGMQRLREQVGSLAAIQADVLVLGETGAGKEVVARALHDLSSRRDGPFVAINAGALAESVVESELFGHEAGAFTGAQKRRIGKFEYANGGTLFLDEIESMSLDVQVKLLRLLQERVVERLGSNQLIPLDIRIIAATKEDLRQAADQGRFRADLYYRLNVASLRIPPLRERGEDIPLLFRHFAEAGAMRHGLTPRELDAGQSARLLAYDWPGNVRELQNAAERFALGLGLSLDDGVLPDAADEPHNLSAKVEAFERSLIAAELERPHNSLRSVAEALGIPRKTLHDKLRKHGLPFNTPGENPPDDGE.

In terms of domain architecture, Response regulatory spans 12–126 (QVLLIDDDPH…ALLDSVRRAL (115 aa)). Asp61 bears the 4-aspartylphosphate mark. A Sigma-54 factor interaction domain is found at 152 to 381 (LIGRSAGMQR…LQNAAERFAL (230 aa)). Residues 180 to 187 (GETGAGKE) and 243 to 252 (ANGGTLFLDE) each bind ATP.

In terms of processing, phosphorylated by DctB.

Functionally, member of the two-component regulatory system DctB/DctD, which regulates C4-dicarboxylate transport via regulation of expression of the dctPQM operon and dctA. This chain is C4-dicarboxylate transport transcriptional regulatory protein DctD, found in Pseudomonas aeruginosa (strain ATCC 15692 / DSM 22644 / CIP 104116 / JCM 14847 / LMG 12228 / 1C / PRS 101 / PAO1).